We begin with the raw amino-acid sequence, 1009 residues long: Ulvan lyase, long isoform (1009 aa).

Positions 1–32 (MTAQKSKYFNRIMTMNTLLFSLLTVGFSQAYA) are cleaved as a signal peptide. 137-138 (SH) serves as a coordination point for substrate. The Proton donor/acceptor role is filled by His-138. Ca(2+) is bound by residues Asp-200, Asp-210, and Lys-212. Tyr-291 and Arg-308 together coordinate substrate. Ca(2+) contacts are provided by Asp-311, Asp-314, and Tyr-316. Tyr-372 lines the substrate pocket.

Belongs to the polysaccharide lyase 24 family.

Functionally, ulvan lyase involved in ulvan degradation. Ulvan is the main polysaccharide component of the Ulvales (green seaweed) cell wall. It is composed of disaccharide building blocks comprising 3-sulfated rhamnose (Rha3S) linked to D-glucuronic acid (GlcA), L-iduronic acid (IduA), or D-xylose (Xyl). Ulvan lyase catalyzes preferentially the endolytic cleavage of the glycosidic bond between Rha3S and the uronic acid GlcA, but not IduA, producing oligosaccharides that have unsaturated 4-deoxy-L-threo-hex-4-enopyranosiduronic acid (deltaUA) at the non-reducing end. The most abundant end products in the degradation of the ulvan polysaccharide were deltaUA-Rha3S disaccharides and deltaUA-Rha3S-IduA-Rha3S and deltaUA-Rha3S-Xyl-Rha3S tetrasaccharides. This is Ulvan lyase, long isoform (ullA) from Glaciecola sp. (strain KUL10).